Consider the following 391-residue polypeptide: Trehalose-phosphate phosphatase (391 aa).

Catalysis depends on Asp147, which acts as the Nucleophile. Residues Asp147, Asp149, and Asp330 each coordinate Mg(2+). Residue 147 to 149 participates in substrate binding; sequence DFD.

It belongs to the trehalose phosphatase family. Mg(2+) serves as cofactor.

It catalyses the reaction alpha,alpha-trehalose 6-phosphate + H2O = alpha,alpha-trehalose + phosphate. The protein operates within glycan biosynthesis; trehalose biosynthesis. Its function is as follows. Removes the phosphate from trehalose 6-phosphate to produce free trehalose. This Mycobacterium bovis (strain ATCC BAA-935 / AF2122/97) protein is Trehalose-phosphate phosphatase (otsB).